Consider the following 569-residue polypeptide: Amyloid-beta A4 precursor protein-binding family A member 3 (569 aa).

Met1 bears the N-acetylmethionine mark. Disordered stretches follow at residues 1–53 and 124–168; these read MEFL…MELD and AQSV…SSPE. Over residues 19–32 the composition is skewed to basic and acidic residues; sequence EEPKGPEVPSEDHP. Low complexity predominate over residues 132–141; sequence AQAAPRLLQP. 2 positions are modified to phosphoserine: Ser166 and Ser367. One can recognise a PID domain in the interval 212-376; it reads DGVLFGAKYL…SASASHPHNG (165 aa). 2 PDZ domains span residues 389–475 and 480–554; these read EVCI…IIHC and TAVI…TMPA.

In terms of assembly, binds to the cytoplasmic domain of amyloid protein (APP). Interacts with HIF1AN (via N-terminus). Interacts with NECAB3; seems to mediate the interaction between NECAB3 and HIF1AN. Ubiquitous.

Its subcellular location is the cytoplasm. The protein resides in the perinuclear region. Its function is as follows. May modulate processing of the amyloid-beta precursor protein (APP) and hence formation of APP-beta. May enhance the activity of HIF1A in macrophages by inhibiting the activity of HIF1AN. This Rattus norvegicus (Rat) protein is Amyloid-beta A4 precursor protein-binding family A member 3 (Apba3).